The primary structure comprises 457 residues: Bifunctional protein GlmU (457 aa).

Residues 1 to 230 (MPLSLPLHIV…AQEVEGVNDL (230 aa)) form a pyrophosphorylase region. Residues 12-15 (LAAG), Lys26, Gln78, 83-84 (GT), 105-107 (YGD), Gly140, Glu155, Asn170, and Asn228 contribute to the UDP-N-acetyl-alpha-D-glucosamine site. A Mg(2+)-binding site is contributed by Asp107. Mg(2+) is bound at residue Asn228. Positions 231 to 251 (WQLTQLERAWQIRAARALCLQ) are linker. The N-acetyltransferase stretch occupies residues 252 to 457 (GARVADPARL…DGWQRPKKKT (206 aa)). UDP-N-acetyl-alpha-D-glucosamine contacts are provided by Arg334 and Lys352. His364 acts as the Proton acceptor in catalysis. Positions 367 and 378 each coordinate UDP-N-acetyl-alpha-D-glucosamine. Acetyl-CoA-binding positions include Ala381, 387-388 (NY), Ser406, Ala424, and Arg441.

The protein in the N-terminal section; belongs to the N-acetylglucosamine-1-phosphate uridyltransferase family. In the C-terminal section; belongs to the transferase hexapeptide repeat family. Homotrimer. Mg(2+) is required as a cofactor.

The protein resides in the cytoplasm. The catalysed reaction is alpha-D-glucosamine 1-phosphate + acetyl-CoA = N-acetyl-alpha-D-glucosamine 1-phosphate + CoA + H(+). It carries out the reaction N-acetyl-alpha-D-glucosamine 1-phosphate + UTP + H(+) = UDP-N-acetyl-alpha-D-glucosamine + diphosphate. The protein operates within nucleotide-sugar biosynthesis; UDP-N-acetyl-alpha-D-glucosamine biosynthesis; N-acetyl-alpha-D-glucosamine 1-phosphate from alpha-D-glucosamine 6-phosphate (route II): step 2/2. It participates in nucleotide-sugar biosynthesis; UDP-N-acetyl-alpha-D-glucosamine biosynthesis; UDP-N-acetyl-alpha-D-glucosamine from N-acetyl-alpha-D-glucosamine 1-phosphate: step 1/1. It functions in the pathway bacterial outer membrane biogenesis; LPS lipid A biosynthesis. Catalyzes the last two sequential reactions in the de novo biosynthetic pathway for UDP-N-acetylglucosamine (UDP-GlcNAc). The C-terminal domain catalyzes the transfer of acetyl group from acetyl coenzyme A to glucosamine-1-phosphate (GlcN-1-P) to produce N-acetylglucosamine-1-phosphate (GlcNAc-1-P), which is converted into UDP-GlcNAc by the transfer of uridine 5-monophosphate (from uridine 5-triphosphate), a reaction catalyzed by the N-terminal domain. The polypeptide is Bifunctional protein GlmU (Xylella fastidiosa (strain M23)).